A 502-amino-acid chain; its full sequence is Maturase K (502 aa).

It belongs to the intron maturase 2 family. MatK subfamily.

The protein resides in the plastid. The protein localises to the chloroplast. In terms of biological role, usually encoded in the trnK tRNA gene intron. Probably assists in splicing its own and other chloroplast group II introns. This Brassica campestris (Field mustard) protein is Maturase K.